Here is a 482-residue protein sequence, read N- to C-terminus: Membrane-bound lytic murein transglycosylase F (482 aa).

Positions 1–18 are cleaved as a signal peptide; the sequence is MKGLFLRIITALALLFWA. The segment at 19 to 267 is non-LT domain; it reads IDMVFPWQFL…NLKEKYLGHI (249 aa). The interval 268-482 is LT domain; the sequence is SQFDYVDTRS…NLEEIKENKD (215 aa). Glu312 is an active-site residue. Polar residues predominate over residues 457–470; the sequence is ENQTTNDNANNESA. The tract at residues 457–482 is disordered; that stretch reads ENQTTNDNANNESAVKNLEEIKENKD. Residues 473–482 are compositionally biased toward basic and acidic residues; that stretch reads NLEEIKENKD.

The protein in the N-terminal section; belongs to the bacterial solute-binding protein 3 family. It in the C-terminal section; belongs to the transglycosylase Slt family.

It is found in the cell outer membrane. The enzyme catalyses Exolytic cleavage of the (1-&gt;4)-beta-glycosidic linkage between N-acetylmuramic acid (MurNAc) and N-acetylglucosamine (GlcNAc) residues in peptidoglycan, from either the reducing or the non-reducing ends of the peptidoglycan chains, with concomitant formation of a 1,6-anhydrobond in the MurNAc residue.. In terms of biological role, murein-degrading enzyme that degrades murein glycan strands and insoluble, high-molecular weight murein sacculi, with the concomitant formation of a 1,6-anhydromuramoyl product. Lytic transglycosylases (LTs) play an integral role in the metabolism of the peptidoglycan (PG) sacculus. Their lytic action creates space within the PG sacculus to allow for its expansion as well as for the insertion of various structures such as secretion systems and flagella. This chain is Membrane-bound lytic murein transglycosylase F, found in Haemophilus influenzae (strain 86-028NP).